The following is a 116-amino-acid chain: Ribosome-binding factor A (116 aa).

The protein belongs to the RbfA family. As to quaternary structure, monomer. Binds 30S ribosomal subunits, but not 50S ribosomal subunits or 70S ribosomes.

It localises to the cytoplasm. Functionally, one of several proteins that assist in the late maturation steps of the functional core of the 30S ribosomal subunit. Associates with free 30S ribosomal subunits (but not with 30S subunits that are part of 70S ribosomes or polysomes). Required for efficient processing of 16S rRNA. May interact with the 5'-terminal helix region of 16S rRNA. The protein is Ribosome-binding factor A of Ureaplasma parvum serovar 3 (strain ATCC 27815 / 27 / NCTC 11736).